The primary structure comprises 218 residues: Major NAD(P)H-flavin oxidoreductase (218 aa).

Residues 12–16 and Asn73 each bind FMN; that span reads RYTSK. 154–159 is an NAD(+) binding site; the sequence is LARLNI. FMN-binding positions include 165 to 166 and 206 to 208; these read EG and KSR.

The protein belongs to the nitroreductase family. As to quaternary structure, homodimer. Requires FMN as cofactor.

Involved in bioluminescence. It is a good supplier of reduced flavin mononucleotide (FMNH2) to the bioluminescence reaction. Major FMN reductase. It is capable of using both NADH and NADPH as electron donors. As electron acceptor, FMN is the most effective, FAD is considerably effective, and riboflavin is the least effective. In Aliivibrio fischeri (Vibrio fischeri), this protein is Major NAD(P)H-flavin oxidoreductase.